Here is a 354-residue protein sequence, read N- to C-terminus: 4-hydroxy-3-methylbut-2-en-1-yl diphosphate synthase (flavodoxin) (354 aa).

Cys-263, Cys-266, Cys-298, and Glu-305 together coordinate [4Fe-4S] cluster.

It belongs to the IspG family. It depends on [4Fe-4S] cluster as a cofactor.

It catalyses the reaction (2E)-4-hydroxy-3-methylbut-2-enyl diphosphate + oxidized [flavodoxin] + H2O + 2 H(+) = 2-C-methyl-D-erythritol 2,4-cyclic diphosphate + reduced [flavodoxin]. It participates in isoprenoid biosynthesis; isopentenyl diphosphate biosynthesis via DXP pathway; isopentenyl diphosphate from 1-deoxy-D-xylulose 5-phosphate: step 5/6. Functionally, converts 2C-methyl-D-erythritol 2,4-cyclodiphosphate (ME-2,4cPP) into 1-hydroxy-2-methyl-2-(E)-butenyl 4-diphosphate. This chain is 4-hydroxy-3-methylbut-2-en-1-yl diphosphate synthase (flavodoxin), found in Fusobacterium nucleatum subsp. nucleatum (strain ATCC 25586 / DSM 15643 / BCRC 10681 / CIP 101130 / JCM 8532 / KCTC 2640 / LMG 13131 / VPI 4355).